The chain runs to 784 residues: ATP-dependent 6-phosphofructokinase, platelet type (784 aa).

The residue at position 1 (Met1) is an N-acetylmethionine. The segment at 1-399 (MDADDSRAPK…NLNTYKRLAI (399 aa)) is N-terminal catalytic PFK domain 1. Residues Ser6, Ser12, and Ser21 each carry the phosphoserine modification. ATP-binding positions include Gly34, 97–98 (RC), and 127–130 (GDGS). Asp128 provides a ligand contact to Mg(2+). Ser142 carries the phosphoserine modification. Substrate-binding positions include 173–175 (SID), Arg210, 217–219 (MGR), Glu273, Arg301, and 307–310 (HVQR). The Proton acceptor role is filled by Asp175. Phosphoserine is present on Ser386. At Lys395 the chain carries N6-acetyllysine. Positions 400–411 (KLPDDQIPKTNC) are interdomain linker. A C-terminal regulatory PFK domain 2 region spans residues 412–784 (NVAVINVGAP…QLEHVQPWSV (373 aa)). Arg481 is a beta-D-fructose 2,6-bisphosphate binding site. Lys486 bears the N6-acetyllysine mark. Beta-D-fructose 2,6-bisphosphate-binding positions include 538–542 (TVSNN), Arg576, 583–585 (MGG), and Glu639. O-linked (GlcNAc) serine glycosylation occurs at Ser540. Tyr651 carries the post-translational modification Phosphotyrosine. Beta-D-fructose 2,6-bisphosphate contacts are provided by residues Arg665 and 671–674 (HMQQ). The residue at position 688 (Lys688) is an N6-acetyllysine. Beta-D-fructose 2,6-bisphosphate is bound at residue Arg744. At Ser783 the chain carries Phosphoserine.

It belongs to the phosphofructokinase type A (PFKA) family. ATP-dependent PFK group I subfamily. Eukaryotic two domain clade 'E' sub-subfamily. In terms of assembly, homo- and heterotetramers. Phosphofructokinase (PFK) enzyme functions as a tetramer composed of different combinations of 3 types of subunits, called PFKM (M), PFKL (L) and PFKP (P). The composition of the PFK tetramer differs according to the tissue type it is present in. The kinetic and regulatory properties of the tetrameric enzyme are dependent on the subunit composition, hence can vary across tissues. Interacts with ATG4B; promoting phosphorylation of ATG4B. The cofactor is Mg(2+). Post-translationally, glcNAcylation decreases enzyme activity. In terms of processing, phosphorylation at Ser-386 promotes interaction with ATG4B.

The protein resides in the cytoplasm. The catalysed reaction is beta-D-fructose 6-phosphate + ATP = beta-D-fructose 1,6-bisphosphate + ADP + H(+). It functions in the pathway carbohydrate degradation; glycolysis; D-glyceraldehyde 3-phosphate and glycerone phosphate from D-glucose: step 3/4. Its activity is regulated as follows. Allosterically activated by ADP, AMP, or fructose 2,6-bisphosphate, and allosterically inhibited by ATP or citrate. Its function is as follows. Catalyzes the phosphorylation of D-fructose 6-phosphate to fructose 1,6-bisphosphate by ATP, the first committing step of glycolysis. The protein is ATP-dependent 6-phosphofructokinase, platelet type (PFKP) of Pongo abelii (Sumatran orangutan).